The primary structure comprises 194 residues: FMN-dependent NADH:quinone oxidoreductase (194 aa).

FMN contacts are provided by residues serine 10 and 90–93 (MYNL).

The protein belongs to the azoreductase type 1 family. As to quaternary structure, homodimer. Requires FMN as cofactor.

It carries out the reaction 2 a quinone + NADH + H(+) = 2 a 1,4-benzosemiquinone + NAD(+). It catalyses the reaction N,N-dimethyl-1,4-phenylenediamine + anthranilate + 2 NAD(+) = 2-(4-dimethylaminophenyl)diazenylbenzoate + 2 NADH + 2 H(+). Quinone reductase that provides resistance to thiol-specific stress caused by electrophilic quinones. Functionally, also exhibits azoreductase activity. Catalyzes the reductive cleavage of the azo bond in aromatic azo compounds to the corresponding amines. This chain is FMN-dependent NADH:quinone oxidoreductase, found in Haemophilus influenzae (strain 86-028NP).